The primary structure comprises 242 residues: Neuromodulin (242 aa).

A disordered region spans residues 1–242 (MLCCMRRTKQ…EEREADQEHA (242 aa)). S-palmitoyl cysteine attachment occurs at residues C3 and C4. Basic and acidic residues predominate over residues 9-32 (KQVEKNDEDQKIEQDGIKPEDKAH). The IQ domain occupies 31-60 (AHKAATKIQASFRGHITRKKLKGEKKGDAP). The residue at position 41 (S41) is a Phosphoserine; by PHK and PKC. Residues 66–84 (ANEKDEAAVAEGTEKKEGE) show a composition bias toward basic and acidic residues. A compositionally biased stretch (low complexity) spans 85-97 (GSTPAEAAPGAGP). S86 is subject to Phosphoserine. The segment covering 98-118 (KPEEKTGKAGETPSEEKKGEG) has biased composition (basic and acidic residues). Over residues 119 to 134 (APDAATEQAAPQAPAP) the composition is skewed to low complexity. Polar residues predominate over residues 143 to 158 (ETESATKASTDNSPSS). 3 positions are modified to phosphoserine: S155, S157, and S158. Basic and acidic residues predominate over residues 159–171 (KAEDAPAKEEPKQ). Low complexity predominate over residues 172 to 204 (ADVPAAVTAAAATAPAAEDAAAMATAQPPTETA). Phosphoserine; by CK2 is present on residues S206 and S207. The span at 209 to 242 (AEEKIEAVDETKPKDSARQDEGKGEEREADQEHA) shows a compositional bias: basic and acidic residues.

This sequence belongs to the neuromodulin family. In terms of assembly, identified in a complex containing FGFR4, NCAM1, CDH2, PLCG1, FRS2, SRC, SHC1, GAP43 and CTTN. Interacts (via IQ domain) with calmodulin. Binds calmodulin with a greater affinity in the absence of Ca(2+) than in its presence. In terms of processing, phosphorylated. Phosphorylation of this protein by a protein kinase C is specifically correlated with certain forms of synaptic plasticity. Post-translationally, palmitoylated by ZDHHC3. Palmitoylation is regulated by ARF6 and is essential for plasma membrane association and axonal and dendritic filopodia induction. Deacylated by LYPLA2.

It is found in the cell membrane. It localises to the cell projection. The protein localises to the growth cone membrane. Its subcellular location is the synapse. The protein resides in the filopodium membrane. It is found in the perikaryon. It localises to the dendrite. The protein localises to the axon. Its subcellular location is the cytoplasm. This protein is associated with nerve growth. It is a major component of the motile 'growth cones' that form the tips of elongating axons. Plays a role in axonal and dendritic filopodia induction. The chain is Neuromodulin (GAP43) from Bos taurus (Bovine).